The following is a 100-amino-acid chain: Integration host factor subunit alpha (100 aa).

Positions 53–72 (FDLRDKRQRPGRNPKTGEEI) are disordered.

This sequence belongs to the bacterial histone-like protein family. Heterodimer of an alpha and a beta chain.

In terms of biological role, this protein is one of the two subunits of integration host factor, a specific DNA-binding protein that functions in genetic recombination as well as in transcriptional and translational control. This chain is Integration host factor subunit alpha, found in Pseudomonas entomophila (strain L48).